We begin with the raw amino-acid sequence, 397 residues long: Lysophospholipid transporter LplT (397 aa).

Topologically, residues 1 to 17 (MSESVHTNTSLWSKGMK) are periplasmic. A helical transmembrane segment spans residues 18-38 (AVIVAQFLSAFGDNALLFATL). Topologically, residues 39–52 (ALLKAQFYPEWSQP) are cytoplasmic. The chain crosses the membrane as a helical span at residues 53-73 (ILQMVFVGAYILFAPFVGQVA). At 74–90 (DSFAKGRVMMFANGLKL) the chain is on the periplasmic side. Residues 91–111 (LGAASICFGINPFLGYTLVGV) traverse the membrane as a helical segment. Topologically, residues 112 to 144 (GAAAYSPAKYGILGELTTGSKLVKANGLMEAST) are cytoplasmic. Residues 145–165 (IAAILLGSVAGGVLADWHVLV) traverse the membrane as a helical segment. Residue A166 is a topological domain, periplasmic. A helical transmembrane segment spans residues 167 to 187 (LAACALAYGGAVVANIYIPKL). At 188 to 226 (AAARPGQSWNLINMTRSFLNACTSLWRNGETRFSLVGTS) the chain is on the cytoplasmic side. A helical membrane pass occupies residues 227 to 247 (LFWGAGVTLRFLLVLWVPVAL). The Periplasmic segment spans residues 248–256 (GITDNATPT). A helical transmembrane segment spans residues 257–277 (YLNAMVAIGIVVGAGAAAKLV). The Cytoplasmic segment spans residues 278 to 280 (TLE). The chain crosses the membrane as a helical span at residues 281–301 (TVSRCMPAGILIGVVVLIFSL). At 302–304 (QHE) the chain is on the periplasmic side. A helical transmembrane segment spans residues 305–325 (LLPAYALLMLIGVMGGFFVVP). Over 326–343 (LNALLQERGKKSVGAGNA) the chain is Cytoplasmic. The chain crosses the membrane as a helical span at residues 344–364 (IAVQNLGENSAMLLMLGIYSL). At 365 to 366 (AV) the chain is on the periplasmic side. The helical transmembrane segment at 367-387 (MVGIPVVPIGIGFGALFALAI) threads the bilayer. Residues 388 to 397 (TALWIWQRRH) lie on the Cytoplasmic side of the membrane.

The protein belongs to the major facilitator superfamily. LplT (TC 2.A.1.42) family.

The protein localises to the cell inner membrane. Functionally, catalyzes the facilitated diffusion of 2-acyl-glycero-3-phosphoethanolamine (2-acyl-GPE) into the cell. This chain is Lysophospholipid transporter LplT, found in Escherichia coli (strain ATCC 8739 / DSM 1576 / NBRC 3972 / NCIMB 8545 / WDCM 00012 / Crooks).